The sequence spans 102 residues: Large ribosomal subunit protein bL21 (102 aa).

The protein belongs to the bacterial ribosomal protein bL21 family. As to quaternary structure, part of the 50S ribosomal subunit. Contacts protein L20.

Functionally, this protein binds to 23S rRNA in the presence of protein L20. The chain is Large ribosomal subunit protein bL21 from Bacillus anthracis (strain A0248).